A 513-amino-acid chain; its full sequence is Chromosomal replication initiator protein DnaA (513 aa).

The domain I, interacts with DnaA modulators stretch occupies residues 1-87 (MSVELWQQCV…IGSKRSSAPR (87 aa)). The interval 87 to 176 (RAAPNAPLAA…QVEGALKHTS (90 aa)) is domain II. Residues 113–163 (AAPAPAPAPTSAPAKKAAAQKAAEVSEEPSRDSFDPMAGASSQQAPVRAEQ) form a disordered region. Residues 123–135 (SAPAKKAAAQKAA) are compositionally biased toward low complexity. The domain III, AAA+ region stretch occupies residues 177–393 (YLNRTFTFEN…GALKRVIAHS (217 aa)). Glycine 221, glycine 223, lysine 224, and threonine 225 together coordinate ATP. Positions 394–513 (HFMGRDITIE…YKNLLRTLTT (120 aa)) are domain IV, binds dsDNA.

The protein belongs to the DnaA family. In terms of assembly, oligomerizes as a right-handed, spiral filament on DNA at oriC.

The protein localises to the cytoplasm. Functionally, plays an essential role in the initiation and regulation of chromosomal replication. ATP-DnaA binds to the origin of replication (oriC) to initiate formation of the DNA replication initiation complex once per cell cycle. Binds the DnaA box (a 9 base pair repeat at the origin) and separates the double-stranded (ds)DNA. Forms a right-handed helical filament on oriC DNA; dsDNA binds to the exterior of the filament while single-stranded (ss)DNA is stabiized in the filament's interior. The ATP-DnaA-oriC complex binds and stabilizes one strand of the AT-rich DNA unwinding element (DUE), permitting loading of DNA polymerase. After initiation quickly degrades to an ADP-DnaA complex that is not apt for DNA replication. Binds acidic phospholipids. This Pseudomonas fluorescens (strain ATCC BAA-477 / NRRL B-23932 / Pf-5) protein is Chromosomal replication initiator protein DnaA.